The sequence spans 633 residues: Telomere-binding protein 1 (633 aa).

A disordered region spans residues 253–272 (HAADRDDDENSSGCVHPSTS). A compositionally biased stretch (polar residues) spans 263-272 (SSGCVHPSTS). The Ubiquitin-like domain maps to 351–430 (VKLTIKSFNI…LNDIGFTLEC (80 aa)). Residues 506–615 (PFADPNSLAL…RVLAAQAYWS (110 aa)) form a sufficient for telomeric DNA binding region. The 60-residue stretch at 529–588 (GQRRIRRPFTVAEVELLVEAVEHLGTGRWRDVKFRAFENVHHRTYVDLKDKWKTLVHTAS) folds into the HTH myb-type domain. One can recognise an SANT domain in the interval 534-584 (RRPFTVAEVELLVEAVEHLGTGRWRDVKFRAFENVHHRTYVDLKDKWKTLV). The H-T-H motif DNA-binding region spans 557-584 (WRDVKFRAFENVHHRTYVDLKDKWKTLV).

In terms of assembly, homodimer. As to expression, ubiquitous.

The protein resides in the chromosome. It localises to the telomere. Functionally, binds the telomeric double-stranded 5'TTTAGGG-3' repeat and regulates telomere length and structure. This chain is Telomere-binding protein 1 (TBP1), found in Oryza sativa subsp. japonica (Rice).